A 1499-amino-acid chain; its full sequence is Rho GTPase-activating protein 35 (1499 aa).

The interval 1–266 is has GTPase activity, required for proper localization; that stretch reads MMMARKQDVR…IPYFEALKQQ (266 aa). GTP is bound by residues K28, 33–37, L52, S56, 95–97, 201–203, and 229–231; these read IGKSC, EQT, KCD, and SAR. 4 consecutive FF domains span residues 270–327, 368–422, 429–483, and 485–550; these read IATA…HIHR, KLLE…HLEK, RAEM…HQKQ, and IDRA…HIHF. Y308 is modified (phosphotyrosine). Residue S589 is modified to Phosphoserine. The pG1 pseudoGTPase domain maps to 592 to 767; the sequence is DPNIDRINLV…LLDSKRNLNL (176 aa). Phosphoserine occurs at positions 770 and 773. Positions 783–947 constitute a pG2 pseudoGTPase domain; that stretch reads RIVMCLMCGD…FKDVVEKKNI (165 aa). Phosphoserine occurs at positions 970, 975, 985, and 1072. Y1087 bears the Phosphotyrosine mark. Phosphotyrosine; by ABL2 and PTK6 is present on Y1105. The segment covering 1124 to 1141 has biased composition (polar residues); it reads KAQSNGSGNGSDSEMDTS. Positions 1124–1148 are disordered; it reads KAQSNGSGNGSDSEMDTSSLERGRK. 6 positions are modified to phosphoserine: S1134, S1142, S1150, S1176, S1179, and S1221. Positions 1177-1207 are disordered; it reads VGSDDELGPIRKKEEDQASQGYKGDNAVIPY. A required for phospholipid binding and regulation of the substrate preference region spans residues 1213 to 1236; that stretch reads PRRRNILRSLRRNTKKPKPKPRPS. A Phosphothreonine modification is found at T1226. At S1236 the chain carries Phosphoserine. One can recognise a Rho-GAP domain in the interval 1249–1436; the sequence is VPLTTVVTPE…LFIQQCPFFF (188 aa). Positions 1446–1499 are disordered; sequence GAAPGSPSAMAPTVPFLTSTPATSQPSPPQSPPPTPQSPMQPLLSSQLQAEHTL. Low complexity predominate over residues 1448 to 1470; sequence APGSPSAMAPTVPFLTSTPATSQ. Positions 1471–1484 are enriched in pro residues; sequence PSPPQSPPPTPQSP. Phosphoserine is present on residues S1472 and S1476. A Phosphothreonine modification is found at T1480. S1483 bears the Phosphoserine mark. Residues 1485 to 1499 show a composition bias toward low complexity; it reads MQPLLSSQLQAEHTL.

In terms of assembly, interacts with RASA1. Interacts with the general transcription factor GTF2I, the interaction sequesters GTF2I in the cytoplasm. Phosphorylation of Tyr-1105 by PTK6 promotes the association with RASA1, inactivating RHOA while activating RAS. Phosphorylation at Tyr-308 by PDGFRA inhibits binding to GTF2I. Phosphorylated by PRKCA at Ser-1221 and Thr-1226, induces relocalization from the cytoplasm to regions of plasma membrane ruffling and prevents the binding and substrate specificity regulation by phospholipids. In brain, phosphorylated by FYN and SRC. During focal adhesion formation, phosphorylated by MAPK1 and MAPK3 at the C-terminal region, probably at Ser-1451, Ser-1476, Thr-1480 and Ser-1483. Phosphorylation by MAPK1 and MAPK3 inhibits GAP function and localizes ARGHAP35 away from newly forming focal adhesions and stress fibers in cells spreading on fibronectin. Phosphorylation at Ser-1476 and Thr-1480 by GSK3B requires priming by MAPK and inhibits RhoGAP activity and modulates polarized cell migration. As to expression, ubiquitously expressed.

The protein localises to the cytoplasm. It is found in the cytoskeleton. Its subcellular location is the cilium basal body. The protein resides in the nucleus. It localises to the cell membrane. Functionally, rho GTPase-activating protein (GAP). Binds several acidic phospholipids which inhibits the Rho GAP activity to promote the Rac GAP activity. This binding is inhibited by phosphorylation by PRKCA. Involved in cell differentiation as well as cell adhesion and migration, plays an important role in retinal tissue morphogenesis, neural tube fusion, midline fusion of the cerebral hemispheres and mammary gland branching morphogenesis. Transduces signals from p21-ras to the nucleus, acting via the ras GTPase-activating protein (GAP). Transduces SRC-dependent signals from cell-surface adhesion molecules, such as laminin, to promote neurite outgrowth. Regulates axon outgrowth, guidance and fasciculation. Modulates Rho GTPase-dependent F-actin polymerization, organization and assembly, is involved in polarized cell migration and in the positive regulation of ciliogenesis and cilia elongation. During mammary gland development, is required in both the epithelial and stromal compartments for ductal outgrowth. Represses transcription of the glucocorticoid receptor by binding to the cis-acting regulatory sequence 5'-GAGAAAAGAAACTGGAGAAACTC-3'; this function is however unclear and would need additional experimental evidences. In Rattus norvegicus (Rat), this protein is Rho GTPase-activating protein 35.